The chain runs to 378 residues: 8-demethyl-8-alpha-L-rhamnosyl tetracenomycin-C 2'-O-methyltransferase (378 aa).

S-adenosyl-L-methionine contacts are provided by residues 195–201, serine 210, aspartate 227, 245–246, and aspartate 268; these read EIGVGGY and DQ. Aspartate 268 serves as a coordination point for Mg(2+). Histidine 271 (proton acceptor) is an active-site residue. The Mg(2+) site is built by glutamate 296 and aspartate 297.

The protein belongs to the methyltransferase OleY/MycE family. It depends on Mg(2+) as a cofactor.

The enzyme catalyses 8-demethyl-8-alpha-L-rhamnosyl-tetracenomycin C + S-adenosyl-L-methionine = 8-demethyl-8-(2-O-methyl-alpha-L-rhamnosyl)-tetracenomycin C + S-adenosyl-L-homocysteine + H(+). It participates in antibiotic biosynthesis. O-methyltransferase involved in the biosynthesis of the permethylated L-rhamnose moiety of elloramycin, an antitumor polyketide. Mediates the methylation of the hydroxy groups at the 2'-position after the sugar moiety has been attached to the aglycon. The chain is 8-demethyl-8-alpha-L-rhamnosyl tetracenomycin-C 2'-O-methyltransferase from Streptomyces olivaceus.